We begin with the raw amino-acid sequence, 621 residues long: Microbial serine proteinase (621 aa).

The signal sequence occupies residues 1 to 24; the sequence is MRKTSLALAISALLSALPIASVQA. Residues 68–440 form the Peptidase S8 domain; it reads PRGGMAGNDL…FGLVDVNKTQ (373 aa). The active-site Charge relay system is Asp-98. Residues 114 to 133 are disordered; it reads PGSKNVVTGGSDPTPTDPDR. Catalysis depends on charge relay system residues His-137 and Ser-354. Residues 454-619 form the P/Homo B domain; it reads AVALAKGKGN…GYSVLGHDAA (166 aa). The interval 457–485 is disordered; sequence LAKGKGNGRSPSAPSRYVGSSPTRSSTQV. Over residues 465–485 the composition is skewed to polar residues; the sequence is RSPSAPSRYVGSSPTRSSTQV.

It belongs to the peptidase S8 family.

Functionally, agent of furonculosis. The polypeptide is Microbial serine proteinase (aspA) (Aeromonas salmonicida).